A 211-amino-acid polypeptide reads, in one-letter code: MSKFQVVEHPLIQHKLSILRRKEASTKEFRELVDEIGMLMAYEVSRDLPLEDVEIETPVQKTTVKQIAGKKLAIVPILRAGIGMVDGILKLIPAARVGHIGMYRDEETLKPVEYLVKLPADIADRQIFLVDPMLATGGSAILAVDSLKKRNSKAENIKFVCLVAAPEGVKALQEAHPDIEIYTAALDEKLNEHGYIVPGLGDAGDRLFGTK.

Residues Arg-79, Arg-104, and 131-139 (DPMLATGGS) each bind 5-phospho-alpha-D-ribose 1-diphosphate. Uracil-binding positions include Ile-196 and 201–203 (GDA). Asp-202 lines the 5-phospho-alpha-D-ribose 1-diphosphate pocket.

The protein belongs to the UPRTase family. The cofactor is Mg(2+).

The enzyme catalyses UMP + diphosphate = 5-phospho-alpha-D-ribose 1-diphosphate + uracil. It participates in pyrimidine metabolism; UMP biosynthesis via salvage pathway; UMP from uracil: step 1/1. Allosterically activated by GTP. Catalyzes the conversion of uracil and 5-phospho-alpha-D-ribose 1-diphosphate (PRPP) to UMP and diphosphate. The protein is Uracil phosphoribosyltransferase of Lactococcus lactis subsp. cremoris (strain SK11).